A 577-amino-acid polypeptide reads, in one-letter code: MHSTLHNQIAAAAKQTKADLVIQNGKIVNVFTREIIEGDLAIVEGMIVGIGRYEGEKTIDAEGRYICPGLIDGHVHIESSMVPPSEFARVVLPHGVTTVIADPHEIANVAGVCGIQFMLDEAKRTPLDVYMMLPSCVPAASFERAGAVLSAAELAPFFNDERVLGLAEVMDYPSLREQHPSMLDKLALAANANRLIDGHLAGLDADAVNVYRSARIHTDHECVTPDEALERVRRGMYVLIRQGSVAKDLKKLLPAIHEHNARRFLFCTDDKHLDDLWFEGSVDHNVRLAIQAGLDPLLAIQMATLNAAECYRLPTKGAVAPGYDADFLFVDDLETLNITHVFKAGRLVAQHGQTVFPAERSAESLEQPLLHSIRCQAVDETDLRIPMKRGTKAHVIEIIPNHLHTNHLITDVDVQEGAFCPSIERDLLKLVVVERHRGLGIGLGIVRGFGFKAGAIASSIAHDSHHIIAAGTNDRDLTAAIEQLRQQHGGLAVIKDGAVLASLPLEIGGLMTRKDYTEVLSGLKQIDKALKAIGANGSFNPFITLSFLALPVIPELKLTDQGLFDVNKWEFIPVEAV.

Belongs to the metallo-dependent hydrolases superfamily. Adenine deaminase family. Mn(2+) is required as a cofactor.

It catalyses the reaction adenine + H2O + H(+) = hypoxanthine + NH4(+). This is Adenine deaminase from Geobacillus kaustophilus (strain HTA426).